Reading from the N-terminus, the 238-residue chain is Glycerol-3-phosphate acyltransferase (238 aa).

The next 6 membrane-spanning stretches (helical) occupy residues 5 to 25 (VIFG…SINF), 61 to 81 (FLVF…SAIL), 88 to 108 (FGAV…VFPI), 125 to 145 (IASL…AMIF), 149 to 169 (IVSL…IIPW), and 194 to 214 (AWYL…FTHI).

Belongs to the PlsY family. In terms of assembly, probably interacts with PlsX.

It localises to the cell membrane. It catalyses the reaction an acyl phosphate + sn-glycerol 3-phosphate = a 1-acyl-sn-glycero-3-phosphate + phosphate. The protein operates within lipid metabolism; phospholipid metabolism. Functionally, catalyzes the transfer of an acyl group from acyl-phosphate (acyl-PO(4)) to glycerol-3-phosphate (G3P) to form lysophosphatidic acid (LPA). This enzyme utilizes acyl-phosphate as fatty acyl donor, but not acyl-CoA or acyl-ACP. The polypeptide is Glycerol-3-phosphate acyltransferase (Mycoplasma mobile (strain ATCC 43663 / 163K / NCTC 11711) (Mesomycoplasma mobile)).